The following is a 127-amino-acid chain: Snaclec macrovipecetin subunit beta (127 aa).

3 disulfide bridges follow: C4-C15, C32-C121, and C98-C113. One can recognise a C-type lectin domain in the interval 11–122; that stretch reads YEGHCYKVFD…CSRTYKFVCK (112 aa).

Heterodimer of subunits alpha and beta; disulfide-linked. Expressed by the venom gland.

The protein localises to the secreted. Interferes with one step of hemostasis (modulation of platelet aggregation, or coagulation cascade, for example). The protein is Snaclec macrovipecetin subunit beta of Macrovipera lebetinus (Levantine viper).